A 377-amino-acid polypeptide reads, in one-letter code: MNPTTQKLVEQNAPAQLVDHNLVPETVCPGVLYEKRPARNLKGEVVPGLYNVWISLDNPKQYNSYTTDMVKGLILAFRAASCARDVASVVFTAVGDKAFCTGGNTKEYAEYYAGNPQEYRQYMRLFNDMVSAILGCDKPVICRVNGMRIGGGQEIGMAADFTVAQDLANFGQAGPKHGSAAIGGATDFLPLMIGCEQAMVSGTLCEPFSAHKANRLGICMQIVPALKVDGKFIANPLVVTDRYLDEFGRIIHGEFKTGDELAAGKELMKRGEIDLSLLDEAVEKLCAKLISTFPECLTKSFEELRKPKLDAWNRNKENSRAWLALNMMNEARTGFRAFNEGNKETGREIEFTDLRQALAKGMPWTPELIESLMPGAK.

This sequence belongs to the enoyl-CoA hydratase/isomerase family. Homotetramer.

The catalysed reaction is 6-oxocyclohex-1-ene-1-carbonyl-CoA + 2 H2O = 3-hydroxy-6-carboxyhexanoyl-CoA + H(+). Its pathway is aromatic compound metabolism; benzoyl-CoA degradation. Its function is as follows. Involved in the central benzoyl-CoA catabolism. Catalyzes the addition of one molecule of water to the double bond and the hydrolytic cleavage of C-C bond in the alicyclic ring, 6-oxocyclohex-1-ene-1-carbonyl-CoA (6-OCH-CoA) to yield 3-hydroxypimelyl-CoA. In Thauera aromatica, this protein is 6-oxocyclohex-1-ene-1-carbonyl-CoA hydrolase (oah).